Consider the following 347-residue polypeptide: Protein phosphatase 1 regulatory subunit 3G (347 aa).

A disordered region spans residues 1–77 (MDPSGEQLHR…ELQEYRRSRA (77 aa)). Polar residues predominate over residues 13–22 (ASSSTSSGDP). Ser81 bears the Phosphoserine mark. Residues 200-339 (EERLRRQRVC…NNEGANYTLR (140 aa)) enclose the CBM21 domain. A disordered region spans residues 258 to 286 (DPESVEPLPPLQSGDSGSKAEDSEEGPGT).

In terms of biological role, glycogen-targeting subunit for protein phosphatase 1 (PP1). Involved in the regulation of hepatic glycogenesis in a manner coupled to the fasting-feeding cycle and distinct from other glycogen-targeting subunits. This chain is Protein phosphatase 1 regulatory subunit 3G (Ppp1r3g), found in Mus musculus (Mouse).